The following is a 190-amino-acid chain: Probable nicotinate-nucleotide adenylyltransferase (190 aa).

Belongs to the NadD family.

The enzyme catalyses nicotinate beta-D-ribonucleotide + ATP + H(+) = deamido-NAD(+) + diphosphate. It participates in cofactor biosynthesis; NAD(+) biosynthesis; deamido-NAD(+) from nicotinate D-ribonucleotide: step 1/1. Catalyzes the reversible adenylation of nicotinate mononucleotide (NaMN) to nicotinic acid adenine dinucleotide (NaAD). This Myxococcus xanthus (strain DK1622) protein is Probable nicotinate-nucleotide adenylyltransferase.